Here is a 75-residue protein sequence, read N- to C-terminus: U6-lycotoxin-Ls1d (75 aa).

An N-terminal signal peptide occupies residues 1–21 (MKLLLFTALVLVVISLVEVEA). Residues 22 to 25 (ENER) constitute a propeptide that is removed on maturation.

Belongs to the neurotoxin 19 (CSTX) family. 06 (U6-Lctx) subfamily. In terms of processing, contains 4 disulfide bonds. Expressed by the venom gland.

Its subcellular location is the secreted. The sequence is that of U6-lycotoxin-Ls1d from Lycosa singoriensis (Wolf spider).